An 87-amino-acid chain; its full sequence is Phosphocarrier protein HPr (87 aa).

One can recognise an HPr domain in the interval 2-87; sequence ASKDFHIVAE…NETMTKEGLA (86 aa). The active-site Pros-phosphohistidine intermediate is the H15. S46 carries the post-translational modification Phosphoserine; by HPrK/P.

It belongs to the HPr family.

Its subcellular location is the cytoplasm. Phosphorylation on Ser-46 inhibits the phosphoryl transfer from enzyme I to HPr. In terms of biological role, general (non sugar-specific) component of the phosphoenolpyruvate-dependent sugar phosphotransferase system (sugar PTS). This major carbohydrate active-transport system catalyzes the phosphorylation of incoming sugar substrates concomitantly with their translocation across the cell membrane. The phosphoryl group from phosphoenolpyruvate (PEP) is transferred to the phosphoryl carrier protein HPr by enzyme I. Phospho-HPr then transfers it to the PTS EIIA domain. Its function is as follows. P-Ser-HPr interacts with the catabolite control protein A (CcpA), forming a complex that binds to DNA at the catabolite response elements cre, operator sites preceding a large number of catabolite-regulated genes. Thus, P-Ser-HPr is a corepressor in carbon catabolite repression (CCR), a mechanism that allows bacteria to coordinate and optimize the utilization of available carbon sources. P-Ser-HPr also plays a role in inducer exclusion, in which it probably interacts with several non-PTS permeases and inhibits their transport activity. This Streptococcus mutans serotype c (strain ATCC 700610 / UA159) protein is Phosphocarrier protein HPr (ptsH).